Here is a 758-residue protein sequence, read N- to C-terminus: Spastin (758 aa).

Residues 1 to 103 (MVRTKNQSSS…SPRSGHHHSY (103 aa)) form a disordered region. Residues 1–121 (MVRTKNQSSS…KQNLYVVSFP (121 aa)) lie on the Cytoplasmic side of the membrane. Residues 1 to 159 (MVRTKNQSSS…VIYRPHRRDC (159 aa)) are interaction with atl. The interval 1–210 (MVRTKNQSSS…RPIQPLEMAA (210 aa)) is required for localization to punctate cytoplasmic foci. Low complexity-rich tracts occupy residues 8-28 (SSSS…SSGA), 43-58 (RSSS…AGGS), 66-76 (SSNRRSPGSSP), and 85-95 (TDDLTPTTCSP). The segment at residues 122–142 (IIFLFNVLRSLIYQLFCIFRY) is an intramembrane region (helical). Topologically, residues 143 to 758 (LYGASTKVIY…WSQDYGDITI (616 aa)) are cytoplasmic. Polar residues-rich tracts occupy residues 169-180 (SKEQQQSLNHPS) and 189-198 (QEQQLSNQPQ). A disordered region spans residues 169–202 (SKEQQQSLNHPSELNREGDGQEQQLSNQPQRFRP). Residues 208-758 (MAANRPGGGY…WSQDYGDITI (551 aa)) are sufficient for interaction with microtubules and microtubule severing. The 76-residue stretch at 233–308 (HRRAFEYISK…SMARDRLHFL (76 aa)) folds into the MIT domain. The interval 353 to 454 (RVRSSGYGPK…GPSGSGASTP (102 aa)) is disordered. Polar residues-rich tracts occupy residues 390 to 406 (NKSQ…TSVG) and 425 to 454 (QFSS…ASTP). Thr439 bears the Phosphothreonine mark. The tract at residues 443 to 455 (NNGPSGSGASTPV) is required for interaction with microtubules. An ATP-binding site is contributed by 523 to 530 (GPPGNGKT).

Belongs to the AAA ATPase family. Spastin subfamily. As to quaternary structure, homohexamer. The homohexamer is stabilized by ATP-binding. The homohexamer may adopt a ring conformation through which microtubules pass prior to being severed. Interacts with microtubules. Interacts with atl; may be involved in microtubule dynamics.

Its subcellular location is the membrane. The protein localises to the cytoplasm. The protein resides in the cytoskeleton. It localises to the microtubule organizing center. It is found in the centrosome. Its subcellular location is the chromosome. The protein localises to the lipid droplet. It catalyses the reaction n ATP + n H2O + a microtubule = n ADP + n phosphate + (n+1) alpha/beta tubulin heterodimers.. ATP-dependent microtubule severing protein. Stimulates microtubule minus-end depolymerization and poleward microtubule flux in the mitotic spindle. Regulates microtubule stability in the neuromuscular junction synapse. Involved in lipid metabolism by regulating the size and distribution of lipid droplets. Involved in axon regeneration by regulating microtubule severing. The protein is Spastin of Drosophila melanogaster (Fruit fly).